Reading from the N-terminus, the 226-residue chain is ATP synthase F(0) complex subunit a (226 aa).

The next 6 membrane-spanning stretches (helical) occupy residues 10 to 30 (ITPTLMGLPIIILIIMFPPVI), 68 to 88 (WSLMLASLIIFIGSTNLLGLL), 97 to 117 (QLSMNLGMAIPPWAGAVILGF), 138 to 158 (IPMLVIIETISLFIQPMALAV), 164 to 184 (ITAGHLLMHLIGGATLVLTSI), and 189 to 209 (AMITFIILIMLTILEFAVALI).

Belongs to the ATPase A chain family. Component of the ATP synthase complex composed at least of ATP5F1A/subunit alpha, ATP5F1B/subunit beta, ATP5MC1/subunit c (homooctomer), MT-ATP6/subunit a, MT-ATP8/subunit 8, ATP5ME/subunit e, ATP5MF/subunit f, ATP5MG/subunit g, ATP5MK/subunit k, ATP5MJ/subunit j, ATP5F1C/subunit gamma, ATP5F1D/subunit delta, ATP5F1E/subunit epsilon, ATP5PF/subunit F6, ATP5PB/subunit b, ATP5PD/subunit d, ATP5PO/subunit OSCP. ATP synthase complex consists of a soluble F(1) head domain (subunits alpha(3) and beta(3)) - the catalytic core - and a membrane F(0) domain - the membrane proton channel (subunits c, a, 8, e, f, g, k and j). These two domains are linked by a central stalk (subunits gamma, delta, and epsilon) rotating inside the F1 region and a stationary peripheral stalk (subunits F6, b, d, and OSCP). Interacts with DNAJC30; interaction is direct.

It localises to the mitochondrion inner membrane. It catalyses the reaction H(+)(in) = H(+)(out). Functionally, subunit a, of the mitochondrial membrane ATP synthase complex (F(1)F(0) ATP synthase or Complex V) that produces ATP from ADP in the presence of a proton gradient across the membrane which is generated by electron transport complexes of the respiratory chain. ATP synthase complex consist of a soluble F(1) head domain - the catalytic core - and a membrane F(1) domain - the membrane proton channel. These two domains are linked by a central stalk rotating inside the F(1) region and a stationary peripheral stalk. During catalysis, ATP synthesis in the catalytic domain of F(1) is coupled via a rotary mechanism of the central stalk subunits to proton translocation. With the subunit c (ATP5MC1), forms the proton-conducting channel in the F(0) domain, that contains two crucial half-channels (inlet and outlet) that facilitate proton movement from the mitochondrial intermembrane space (IMS) into the matrix. Protons are taken up via the inlet half-channel and released through the outlet half-channel, following a Grotthuss mechanism. This chain is ATP synthase F(0) complex subunit a, found in Cricetulus griseus (Chinese hamster).